We begin with the raw amino-acid sequence, 295 residues long: Cyclic dipyrimidine nucleotide synthase CdnE (295 aa).

The disordered stretch occupies residues 1–28 (MAKYTEDQLTSWTKPPSDSEQTKLENSE). Over residues 7–19 (DQLTSWTKPPSDS) the composition is skewed to polar residues. The UTP site is built by Q51 and S53. D67 lines the Mg(2+) pocket. K123, N169, R197, F217, and K276 together coordinate UTP. The Pyrimidine specificity motif (R/Q)xW in donor pocket signature appears at 275–277 (RKW).

Belongs to the CD-NTase family. E02 subfamily. In terms of assembly, monomer. Mg(2+) is required as a cofactor.

It carries out the reaction 2 UTP = c-di-UMP + 2 diphosphate. It catalyses the reaction UTP + CTP = cyclic CMP-UMP + 2 diphosphate. Its function is as follows. Cyclic nucleotide synthase (second messenger synthase) of a CBASS antivirus system. CBASS (cyclic oligonucleotide-based antiphage signaling system) provides immunity against bacteriophage. The CD-NTase protein synthesizes cyclic nucleotides in response to infection; these serve as specific second messenger signals. The signals activate a diverse range of effectors, leading to bacterial cell death and thus abortive phage infection. A type I-B(UU) CBASS system. This chain is Cyclic dipyrimidine nucleotide synthase CdnE, found in Cecembia lonarensis (strain CCUG 58316 / KCTC 22772 / LW9).